The chain runs to 536 residues: Thiamine transport system permease protein ThiP (536 aa).

A run of 12 helical transmembrane segments spans residues 12-32 (WLIPGVSATTLVVAVALAAFL), 58-78 (FSFWQAFLSALLSVIPAIFLA), 95-115 (LCAMTLILPVLVAVFGILSVY), 134-154 (FSPYGLQGILLAHVFFNLPMA), 199-219 (VAALIFMLCFASFATVLSLGG), 240-260 (PARAAMLALLQMVCCLGLVLL), 293-313 (VLIVLALLLLLPPLLAVIVDG), 334-354 (SLRIALAAGVLCVVLTMMLLW), 374-394 (SGMLILAMPGIVLATGFFLLL), 404-424 (ADGIVIFTNALMAIPYALKVL), 463-483 (AQALAFACVLSIGDFGVVALF), and 506-526 (DGAVTALILLLLCFLLFTVIE). Residues 56–261 (VRFSFWQAFL…VCCLGLVLLS (206 aa)) enclose the ABC transmembrane type-1 1 domain. Residues 331 to 525 (LWTSLRIALA…LLCFLLFTVI (195 aa)) form the ABC transmembrane type-1 2 domain.

This sequence belongs to the binding-protein-dependent transport system permease family. CysTW subfamily. As to quaternary structure, the complex is composed of two ATP-binding proteins (ThiQ), two transmembrane proteins (ThiP) and a solute-binding protein (ThiB).

The protein localises to the cell inner membrane. Transport is inhibited by the sulfhydryl-specific modifier N-ethylmaleimide. Functionally, part of the ABC transporter complex ThiBPQ involved in thiamine import. Probably responsible for the translocation of the substrate across the membrane. This chain is Thiamine transport system permease protein ThiP (thiP), found in Escherichia coli (strain K12).